The chain runs to 315 residues: Replication factor C small subunit (315 aa).

An ATP-binding site is contributed by 43–50 (GSPGVGKT).

The protein belongs to the activator 1 small subunits family. RfcS subfamily. Heteromultimer composed of small subunits (RfcS) and large subunits (RfcL).

Functionally, part of the RFC clamp loader complex which loads the PCNA sliding clamp onto DNA. The sequence is that of Replication factor C small subunit from Methanococcus maripaludis (strain C6 / ATCC BAA-1332).